The following is a 422-amino-acid chain: Glutamyl-tRNA reductase (422 aa).

Substrate contacts are provided by residues 49–52 (TCNR), S108, 113–115 (EPQ), and Q119. The active-site Nucleophile is the C50. Residue 188–193 (GAGQTI) coordinates NADP(+).

The protein belongs to the glutamyl-tRNA reductase family. In terms of assembly, homodimer.

The catalysed reaction is (S)-4-amino-5-oxopentanoate + tRNA(Glu) + NADP(+) = L-glutamyl-tRNA(Glu) + NADPH + H(+). It functions in the pathway porphyrin-containing compound metabolism; protoporphyrin-IX biosynthesis; 5-aminolevulinate from L-glutamyl-tRNA(Glu): step 1/2. In terms of biological role, catalyzes the NADPH-dependent reduction of glutamyl-tRNA(Glu) to glutamate 1-semialdehyde (GSA). The sequence is that of Glutamyl-tRNA reductase from Marinomonas sp. (strain MWYL1).